Consider the following 69-residue polypeptide: Magnetosome protein MamI (69 aa).

The Cytoplasmic portion of the chain corresponds to 1-2 (MP). The helical transmembrane segment at 3–23 (SVIFGLLALAIGLLGLTAWWW) threads the bilayer. Residues 24–31 (SVTEFLRG) are Lumenal-facing. Residues 32–52 (AVPVALIIFGLVALAAGVQSV) traverse the membrane as a helical segment. Over 53-69 (RVPPAGKRANSDPNIDG) the chain is Cytoplasmic.

Belongs to the magnetosome MamI protein family.

The protein resides in the magnetosome membrane. May be involved in an early stage of magnetosome nucleation. Not essential for formation of magnetosome membrane vesicles, it is probably functionally redundant with other proteins. May bind magnetite. One of 7 genes (mamLQBIEMO) able to induce magnetosome membrane biogenesis; coexpression of mamLQRBIEMO in a deletion of the 17 gene mamAB operon restores magnetosome vesicle formation but not magnetite biosynthesis. This is Magnetosome protein MamI from Magnetospirillum gryphiswaldense (strain DSM 6361 / JCM 21280 / NBRC 15271 / MSR-1).